A 259-amino-acid polypeptide reads, in one-letter code: Gasdermin bGSDM (259 aa).

Residue Cys-3 is the site of S-palmitoyl cysteine attachment. The next 4 membrane-spanning stretches (beta stranded) occupy residues 70–86 (FQFR…AASV), 98–116 (SGSF…IQLS), 162–179 (GIRI…DLSA), and 187–203 (AKAK…SYAF). Residues 244–259 (PFAFIGDDAFVDLPES) are C-terminal region.

This sequence belongs to the bacterial gasdermin family. As to quaternary structure, monomer in solution. In terms of assembly, forms large, homooligomeric ring-shaped pores when inserted in membranes. In terms of processing, palmitoylation helps stabilize the inactive state; may self palmitoylate. Palmitoylation plays a significant role in pore formation.

It is found in the cytoplasm. The protein resides in the cell inner membrane. The full-length protein before cleavage is inactive: intramolecular interactions between the N-terminal domain and the C-terminal region as well as the lipid modification, mediate autoinhibition. The pyroptosis-like-inducing activity is carried by the released N-terminal domain (Gasdermin bGSDM, N-terminus). Precursor of a pore-forming protein involved in defense against bacteriophages. Expression of bGSDM and the neighboring protease gene (Ga0098714_109514) is toxic in E.coli on solid medium. Cleavage of this precursor by its dedicated protease releases the active moiety (gasdermin bGSDM, N-terminus) which inserts into membranes, forming pores and triggering cell death. Its function is as follows. Pore-forming protein that causes membrane permeabilization via a pyroptosis-like activity. Makes ring-like pores when released. The polypeptide is Gasdermin bGSDM (Bradyrhizobium tropiciagri).